We begin with the raw amino-acid sequence, 288 residues long: Energy-coupling factor transporter ATP-binding protein EcfA2 (288 aa).

One can recognise an ABC transporter domain in the interval 2–244 (IKFEKVNYTY…VDFLKAHELG (243 aa)). 39–46 (GHTGSGKS) contributes to the ATP binding site. Glutamate 170 serves as the catalytic Proton acceptor.

The protein belongs to the ABC transporter superfamily. Energy-coupling factor EcfA family. In terms of assembly, forms a stable energy-coupling factor (ECF) transporter complex composed of 2 membrane-embedded substrate-binding proteins (S component), 2 ATP-binding proteins (A component) and 2 transmembrane proteins (T component). In L.lactis forms a stable complex with EcfA' and EcfT and substrate-binding components. In E.coli forms a stable complex with EcfA, EcfT and individually with 3 tested substrate-binding components (BioY, NiaX and ThiT) with a stoichiometry of 1.1:1:1. The core ECF complex interacts with a number of substrate-specific binding components, including BioY, BioY2, HmpT, NiaX, PanT, QueT, RibU and ThiT.

It localises to the cell membrane. ATP-binding (A) component of a common energy-coupling factor (ECF) ABC-transporter complex. Unlike classic ABC transporters this ECF transporter provides the energy necessary to transport a number of different substrates. In this organism these probably include biotin, thiamine precursor, niacin, pantothenic acid, queuosine precursor, riboflavin and thiamine. Uptake of niacin or riboflavin into proteosomes containing EcfA1A2T and Niax or RibU has been demonstrated. Uptake requires hydrolyzable Mg-ATP and is substrate-specific; NiaX-containing proteosomes did not transport riboflavin. This is Energy-coupling factor transporter ATP-binding protein EcfA2 from Lactococcus lactis subsp. cremoris (strain MG1363).